We begin with the raw amino-acid sequence, 267 residues long: 4-hydroxy-tetrahydrodipicolinate reductase (267 aa).

NAD(+) contacts are provided by residues 9 to 14 (GASGRM) and aspartate 35. Arginine 36 provides a ligand contact to NADP(+). NAD(+) contacts are provided by residues 98-100 (GTT) and 122-125 (ASNF). The Proton donor/acceptor role is filled by histidine 155. Residue histidine 156 participates in (S)-2,3,4,5-tetrahydrodipicolinate binding. Lysine 159 functions as the Proton donor in the catalytic mechanism. 165 to 166 (GT) lines the (S)-2,3,4,5-tetrahydrodipicolinate pocket.

Belongs to the DapB family.

It localises to the cytoplasm. The enzyme catalyses (S)-2,3,4,5-tetrahydrodipicolinate + NAD(+) + H2O = (2S,4S)-4-hydroxy-2,3,4,5-tetrahydrodipicolinate + NADH + H(+). The catalysed reaction is (S)-2,3,4,5-tetrahydrodipicolinate + NADP(+) + H2O = (2S,4S)-4-hydroxy-2,3,4,5-tetrahydrodipicolinate + NADPH + H(+). It participates in amino-acid biosynthesis; L-lysine biosynthesis via DAP pathway; (S)-tetrahydrodipicolinate from L-aspartate: step 4/4. Catalyzes the conversion of 4-hydroxy-tetrahydrodipicolinate (HTPA) to tetrahydrodipicolinate. In Chromobacterium violaceum (strain ATCC 12472 / DSM 30191 / JCM 1249 / CCUG 213 / NBRC 12614 / NCIMB 9131 / NCTC 9757 / MK), this protein is 4-hydroxy-tetrahydrodipicolinate reductase.